The sequence spans 345 residues: Protein-glutamate methylesterase/protein-glutamine glutaminase 1 (345 aa).

In terms of domain architecture, Response regulatory spans 8–123; it reads SVLVIDDSAH…FEAMEALRVE (116 aa). A 4-aspartylphosphate modification is found at Asp59. The CheB-type methylesterase domain occupies 151–344; sequence AGEPPLVVAV…PALAALARRR (194 aa). Active-site residues include Ser163, His190, and Asp286.

The protein belongs to the CheB family. Post-translationally, phosphorylated by CheA. Phosphorylation of the N-terminal regulatory domain activates the methylesterase activity.

It localises to the cytoplasm. The catalysed reaction is [protein]-L-glutamate 5-O-methyl ester + H2O = L-glutamyl-[protein] + methanol + H(+). It catalyses the reaction L-glutaminyl-[protein] + H2O = L-glutamyl-[protein] + NH4(+). Its function is as follows. Involved in chemotaxis. Part of a chemotaxis signal transduction system that modulates chemotaxis in response to various stimuli. Catalyzes the demethylation of specific methylglutamate residues introduced into the chemoreceptors (methyl-accepting chemotaxis proteins or MCP) by CheR. Also mediates the irreversible deamidation of specific glutamine residues to glutamic acid. The chain is Protein-glutamate methylesterase/protein-glutamine glutaminase 1 from Myxococcus xanthus (strain DK1622).